Reading from the N-terminus, the 157-residue chain is UPF0127 protein TK1120 (157 aa).

Belongs to the UPF0127 family.

The chain is UPF0127 protein TK1120 from Thermococcus kodakarensis (strain ATCC BAA-918 / JCM 12380 / KOD1) (Pyrococcus kodakaraensis (strain KOD1)).